The sequence spans 401 residues: Probable acid ceramidase (401 aa).

Positions 1-22 are cleaved as a signal peptide; the sequence is MKPVAISLSLLLLVTLLPGSEQ. 3 N-linked (GlcNAc...) asparagine glycosylation sites follow: Asn-101, Asn-303, and Asn-371.

It belongs to the acid ceramidase family.

It catalyses the reaction an N-acyl-sphingoid base + H2O = a sphingoid base + a fatty acid. It carries out the reaction an N-acylsphing-4-enine + H2O = sphing-4-enine + a fatty acid. The enzyme catalyses an N-acyl-15-methylhexadecasphing-4-enine + H2O = 15-methylhexadecasphing-4-enine + a fatty acid. Functionally, catalyzes the hydrolysis of ceramides into sphingoid base and free fatty acid. C.elegans contain specific sphingoid bases, which are unique or different in structure compared to the sphingoid bases found in other animals. Two examples of these distinctive compounds are: 15-methylhexadecasphinganine and 15-methylhexadecasphing-4-enine. The chain is Probable acid ceramidase from Caenorhabditis elegans.